The chain runs to 100 residues: UPF0473 protein Lm4b_01511 (100 aa).

Belongs to the UPF0473 family.

This is UPF0473 protein Lm4b_01511 from Listeria monocytogenes serotype 4b (strain CLIP80459).